The sequence spans 417 residues: CinA-like protein (417 aa).

It belongs to the CinA family.

The chain is CinA-like protein from Synechococcus sp. (strain RCC307).